A 647-amino-acid polypeptide reads, in one-letter code: DNA mismatch repair protein MutL (647 aa).

2 disordered regions span residues 356 to 391 (EGSQAPLPVTPQPRPALTSEKPVPAPQAQPQQSSIS) and 407 to 428 (PRPQPSLRPQYQGSVTSKEALP). The span at 413–423 (LRPQYQGSVTS) shows a compositional bias: polar residues.

This sequence belongs to the DNA mismatch repair MutL/HexB family.

This protein is involved in the repair of mismatches in DNA. It is required for dam-dependent methyl-directed DNA mismatch repair. May act as a 'molecular matchmaker', a protein that promotes the formation of a stable complex between two or more DNA-binding proteins in an ATP-dependent manner without itself being part of a final effector complex. The sequence is that of DNA mismatch repair protein MutL from Citrifermentans bemidjiense (strain ATCC BAA-1014 / DSM 16622 / JCM 12645 / Bem) (Geobacter bemidjiensis).